Reading from the N-terminus, the 257-residue chain is Receptor expression-enhancing protein 4 (257 aa).

Transmembrane regions (helical) follow at residues 1 to 21 (MVSWMICRLVVLIFGMLYPAY) and 42 to 62 (WIVFAIFMAAETFTDIFISWF). Residues Ser152 and Ser194 each carry the phosphoserine modification. Residues 177-257 (VPRRRPPIGY…KKAMPSDMDS (81 aa)) are disordered. At Thr196 the chain carries Phosphothreonine. Ser202 and Ser253 each carry phosphoserine.

Belongs to the DP1 family.

It is found in the endoplasmic reticulum membrane. Microtubule-binding protein required to ensure proper cell division and nuclear envelope reassembly by sequestering the endoplasmic reticulum away from chromosomes during mitosis. Probably acts by clearing the endoplasmic reticulum membrane from metaphase chromosomes. The sequence is that of Receptor expression-enhancing protein 4 (Reep4) from Mus musculus (Mouse).